The chain runs to 487 residues: Dihydrofolate synthase/folylpolyglutamate synthase (487 aa).

44–46 (DPS) serves as a coordination point for 7,8-dihydropteroate. Residue 74 to 77 (GKTS) participates in ATP binding. Thr76 and Ser98 together coordinate Mg(2+). Residue 150–153 (SKFE) participates in 7,8-dihydropteroate binding. Mg(2+) is bound at residue Glu174. 181–183 (WDA) lines the 7,8-dihydropteroate pocket. His201 and Asp203 together coordinate Mg(2+). ATP is bound by residues Asn301, Arg338, and 351-354 (DAAH). Asp384 serves as a coordination point for Mg(2+).

Belongs to the folylpolyglutamate synthase family. Monomer. It depends on Mg(2+) as a cofactor.

The catalysed reaction is 7,8-dihydropteroate + L-glutamate + ATP = 7,8-dihydrofolate + ADP + phosphate + H(+). It catalyses the reaction (6S)-5,6,7,8-tetrahydrofolyl-(gamma-L-Glu)(n) + L-glutamate + ATP = (6S)-5,6,7,8-tetrahydrofolyl-(gamma-L-Glu)(n+1) + ADP + phosphate + H(+). It participates in cofactor biosynthesis; tetrahydrofolate biosynthesis; 7,8-dihydrofolate from 2-amino-4-hydroxy-6-hydroxymethyl-7,8-dihydropteridine diphosphate and 4-aminobenzoate: step 2/2. Its pathway is cofactor biosynthesis; tetrahydrofolylpolyglutamate biosynthesis. Functionally, catalyzes the addition of a glutamate residue to dihydropteroate (7,8-dihydropteroate or H2Pte) to form dihydrofolate (7,8-dihydrofolate monoglutamate or H2Pte-Glu). Also catalyzes successive additions of L-glutamate to tetrahydrofolate, leading to folylpolyglutamate derivatives. Is involved in the bioactivation of the antituberculous drug para-aminosalicylic acid (PAS). Is able to use hydroxy-dihydropteroate (H2PtePAS) as substrate, which is the product formed by the action of DHPS (FolP1) on PAS, leading to hydroxy-dihydrofolate (H2PtePAS-Glu). This compound inhibits dihydrofolate reductase DHFR (DfrA), the next enzyme in the folate pathway, and thus disrupts the folate-dependent metabolic pathways. The protein is Dihydrofolate synthase/folylpolyglutamate synthase of Mycobacterium tuberculosis (strain ATCC 25618 / H37Rv).